The sequence spans 382 residues: MTRAGLSPLAWLDEVADQRRAAGLRRALRTRPAGGTAVDLASNDYLGLSTHPRVVEGAVRAVREWGAGSTGSRLVTGNTELHEGFERALAAFTGAESALVFSSGYTANLGAVVALSGPGSLLVSDALTHASLVDACRLSRARVVVTPHRDVTAIETALATRDEQRAIVVTDSVFSADGVLAPLRDMHDVCRRHGALLIVDEAHGLGVRGTGGRGLLDEVGLAGAPDVVMTTTLSKALGSQGGVVLGPLAVRDHLIDAARPFIFDTGLAPAAVGAAWAALEVLVDEPSRARAVLDNAAALAQACDVPARPDSAVVSVILGEPEVALAAAIACLEQGLRVGCFRPPTVPAGTSRLRLTARASLTDDDLDTARRVLADVLTAARR.

Arg-26 contributes to the substrate binding site. Gly-104 to Tyr-105 is a pyridoxal 5'-phosphate binding site. His-129 serves as a coordination point for substrate. Pyridoxal 5'-phosphate is bound by residues Ser-175, Asp-200–His-203, and Thr-232–Lys-235. Lys-235 is subject to N6-(pyridoxal phosphate)lysine. Residue Thr-345 coordinates substrate.

The protein belongs to the class-II pyridoxal-phosphate-dependent aminotransferase family. BioF subfamily. In terms of assembly, homodimer. Pyridoxal 5'-phosphate is required as a cofactor.

It carries out the reaction 6-carboxyhexanoyl-[ACP] + L-alanine + H(+) = (8S)-8-amino-7-oxononanoate + holo-[ACP] + CO2. It functions in the pathway cofactor biosynthesis; biotin biosynthesis. Catalyzes the decarboxylative condensation of pimeloyl-[acyl-carrier protein] and L-alanine to produce 8-amino-7-oxononanoate (AON), [acyl-carrier protein], and carbon dioxide. This chain is 8-amino-7-oxononanoate synthase, found in Mycobacterium sp. (strain KMS).